Here is a 314-residue protein sequence, read N- to C-terminus: MPEQLVLRATLEGHSGWVTSLSTAPENPDILLSGSRDKSIILWNLVRDDVNYGVAQRRLTGHSHFVSDCALSFDSHYALSASWDKTIRLWDLEKGECTHQFVGHTSDVLSVSISPDNRQVVSGSRDKTIKIWNIIGNCKYTITDGGHSDWVSCVRFSPNPDNLTFVSAGWDKAVKVWDLETFSLRTSHYGHTGYVSAVTISPDGSLCASGGRDGTLMLWDLNESTHLYSLEAKANINALVFSPNRYWLCAATGSSIRIFDLETQEKVDELTVDFVGVGKKSSEPECISLTWSPDGQTLFSGWTDNLIRVWQVTK.

A Phosphothreonine modification is found at Thr-10. One copy of the WD 1 repeat lies at 13–44 (GHSGWVTSLSTAPENPDILLSGSRDKSIILWN). Ser-39 carries the phosphoserine modification. Tyr-52 carries the phosphotyrosine modification. 6 WD repeats span residues 61–91 (GHSHFVSDCALSFDSHYALSASWDKTIRLWD), 103–133 (GHTSDVLSVSISPDNRQVVSGSRDKTIKIWN), 146–178 (GHSDWVSCVRFSPNPDNLTFVSAGWDKAVKVWD), 190–220 (GHTGYVSAVTISPDGSLCASGGRDGTLMLWD), 231–260 (EAKANINALVFSPNRYWLCAATGSSIRIFD), and 281–311 (SSEPECISLTWSPDGQTLFSGWTDNLIRVWQ). Ser-148 carries the phosphoserine modification. Residues Ser-242 and Ser-255 each carry the phosphoserine modification.

It belongs to the WD repeat G protein beta family. Ribosomal protein RACK1 subfamily. As to quaternary structure, component of the small ribosomal subunit (SSU). Mature yeast ribosomes consist of a small (40S) and a large (60S) subunit. The 40S small subunit contains 1 molecule of ribosomal RNA (18S rRNA) and at least 33 different proteins. The large 60S subunit contains 3 rRNA molecules (25S, 5.8S and 5S rRNA) and at least 46 different proteins. RACK1 is located at the head of the SSU in the vicinity of the mRNA exit channel. RACK1 interacts with the mRNA-binding protein SCP16. RACK1 also exists simultaneously as a homodimer in a cytosolic non-ribosome-bound form. Interacts with pck2. Interacts with pat1/ran1.

It is found in the cytoplasm. The protein localises to the membrane. Its function is as follows. Component of the ribosome, a large ribonucleoprotein complex responsible for the synthesis of proteins in the cell. The small ribosomal subunit (SSU) binds messenger RNAs (mRNAs) and translates the encoded message by selecting cognate aminoacyl-transfer RNA (tRNA) molecules. The large subunit (LSU) contains the ribosomal catalytic site termed the peptidyl transferase center (PTC), which catalyzes the formation of peptide bonds, thereby polymerizing the amino acids delivered by tRNAs into a polypeptide chain. The nascent polypeptides leave the ribosome through a tunnel in the LSU and interact with protein factors that function in enzymatic processing, targeting, and the membrane insertion of nascent chains at the exit of the ribosomal tunnel. Located at the head of the 40S ribosomal subunit in the vicinity of the mRNA exit channel, RACK1 serves as a scaffold protein that can recruit other proteins to the ribosome. Involved in induction of the ribosome quality control (RQC) pathway; a pathway that degrades nascent peptide chains during problematic translation. Involved in the negative regulation of translation of a specific subset of proteins. May be a receptor for protein kinase C in the regulation of actin cytoskeleton organization during cell wall synthesis and morphogenesis. Involved in the control of G2/M transition. May function as an anchoring protein for pat1/ran1 kinase. Negatively regulates the cell integrity transduction pathway by favoring translation of the tyrosine-phosphatases pyp1 and pyp2 that deactivate pmk1. Positively regulates the synthesis of the stress-responsive transcription factor Atf1 and the cytoplasmic catalase, a detoxificant enzyme induced by treatment with hydrogen peroxide. In Schizosaccharomyces pombe (strain 972 / ATCC 24843) (Fission yeast), this protein is Small ribosomal subunit protein RACK1.